Consider the following 576-residue polypeptide: MAGUK p55 subfamily member 7 (576 aa).

L27 domains follow at residues 10-64 (CDMG…EKQN) and 65-122 (PLPI…YDPV). The region spanning 139 to 220 (IIRLVKNSEP…AITFKIIPST (82 aa)) is the PDZ domain. Residues 228–298 (EGKIFIKALF…PSKHFQERRL (71 aa)) form the SH3 domain. A phospho-regulated basic and hydrophobic (PRBH) motif region spans residues 289-383 (PSKHFQERRL…VGPVGVGLNE (95 aa)). A Guanylate kinase-like domain is found at 368 to 560 (YRLIVLVGPV…AFNELKTTFD (193 aa)). Position 409 is a phosphoserine (Ser409).

The protein belongs to the MAGUK family. As to quaternary structure, heterodimer; able to heterodimerize via its C-terminal L27 domain with LIN7A, LIN7B and LIN7C. Forms a tripartite complex composed of DLG1, MPP7 and LIN7 (LIN7A or LIN7C). Interacts with DLG1 via its N-terminal L27 domain. Interacts with PALS1 and PATJ. Phosphorylated by aPKC which promotes dissociation from the cell cortex.

It is found in the membrane. The protein resides in the lateral cell membrane. It localises to the cell junction. Its subcellular location is the tight junction. The protein localises to the adherens junction. It is found in the cytoplasm. The protein resides in the cell cortex. Acts as an important adapter that promotes epithelial cell polarity and tight junction formation via its interaction with DLG1. Involved in the assembly of protein complexes at sites of cell-cell contact. The protein is MAGUK p55 subfamily member 7 (Mpp7) of Mus musculus (Mouse).